Reading from the N-terminus, the 441-residue chain is ATP-dependent RNA helicase sub2 (441 aa).

Residues 23–32 are compositionally biased toward low complexity; it reads TTAAPAANGD. A disordered region spans residues 23–42; the sequence is TTAAPAANGDAAKKGDLTVS. Residues 58–86 carry the Q motif motif; that stretch reads TGFRDFLLKGELLRAITDCGFEHPSEVQQ. A Helicase ATP-binding domain is found at 89-264; that stretch reads IPTAILNVDV…KKFMRNPLEV (176 aa). 102–109 contributes to the ATP binding site; that stretch reads AKSGLGKT. The DECD box motif lies at 211 to 214; the sequence is DECD. A Helicase C-terminal domain is found at 292–437; that stretch reads KLNELLDSLE…EYPEGGVDSS (146 aa).

The protein belongs to the DEAD box helicase family. DECD subfamily.

It is found in the nucleus. The catalysed reaction is ATP + H2O = ADP + phosphate + H(+). Functionally, ATP-binding RNA helicase involved in transcription elongation and required for the export of mRNA out of the nucleus. SUB2 also plays a role in pre-mRNA splicing and spliceosome assembly. May be involved in rDNA and telomeric silencing, and maintenance of genome integrity. This is ATP-dependent RNA helicase sub2 (sub2) from Aspergillus oryzae (strain ATCC 42149 / RIB 40) (Yellow koji mold).